The chain runs to 68 residues: Large ribosomal subunit protein bL32 (68 aa).

The protein belongs to the bacterial ribosomal protein bL32 family.

The sequence is that of Large ribosomal subunit protein bL32 from Cereibacter sphaeroides (strain ATCC 17025 / ATH 2.4.3) (Rhodobacter sphaeroides).